A 190-amino-acid chain; its full sequence is Segregation and condensation protein B (190 aa).

This sequence belongs to the ScpB family. As to quaternary structure, homodimer. Homodimerization may be required to stabilize the binding of ScpA to the Smc head domains. Component of a cohesin-like complex composed of ScpA, ScpB and the Smc homodimer, in which ScpA and ScpB bind to the head domain of Smc. The presence of the three proteins is required for the association of the complex with DNA.

Its subcellular location is the cytoplasm. Participates in chromosomal partition during cell division. May act via the formation of a condensin-like complex containing Smc and ScpA that pull DNA away from mid-cell into both cell halves. The sequence is that of Segregation and condensation protein B from Bacillus cereus (strain ATCC 14579 / DSM 31 / CCUG 7414 / JCM 2152 / NBRC 15305 / NCIMB 9373 / NCTC 2599 / NRRL B-3711).